Consider the following 346-residue polypeptide: Phenylalanine--tRNA ligase alpha subunit (346 aa).

E260 contributes to the Mg(2+) binding site.

This sequence belongs to the class-II aminoacyl-tRNA synthetase family. Phe-tRNA synthetase alpha subunit type 1 subfamily. Tetramer of two alpha and two beta subunits. Mg(2+) is required as a cofactor.

It localises to the cytoplasm. It catalyses the reaction tRNA(Phe) + L-phenylalanine + ATP = L-phenylalanyl-tRNA(Phe) + AMP + diphosphate + H(+). The sequence is that of Phenylalanine--tRNA ligase alpha subunit from Herpetosiphon aurantiacus (strain ATCC 23779 / DSM 785 / 114-95).